Here is a 256-residue protein sequence, read N- to C-terminus: Pyridoxine 5'-phosphate synthase (256 aa).

Residue Asn12 coordinates 3-amino-2-oxopropyl phosphate. A 1-deoxy-D-xylulose 5-phosphate-binding site is contributed by 14–15 (DH). Arg23 lines the 3-amino-2-oxopropyl phosphate pocket. Residue His48 is the Proton acceptor of the active site. Residues Arg50 and His55 each contribute to the 1-deoxy-D-xylulose 5-phosphate site. The Proton acceptor role is filled by Glu75. Residue Thr105 coordinates 1-deoxy-D-xylulose 5-phosphate. His199 functions as the Proton donor in the catalytic mechanism. 3-amino-2-oxopropyl phosphate-binding positions include Gly200 and 221–222 (GY).

It belongs to the PNP synthase family. In terms of assembly, homooctamer; tetramer of dimers.

The protein localises to the cytoplasm. It carries out the reaction 3-amino-2-oxopropyl phosphate + 1-deoxy-D-xylulose 5-phosphate = pyridoxine 5'-phosphate + phosphate + 2 H2O + H(+). The protein operates within cofactor biosynthesis; pyridoxine 5'-phosphate biosynthesis; pyridoxine 5'-phosphate from D-erythrose 4-phosphate: step 5/5. Catalyzes the complicated ring closure reaction between the two acyclic compounds 1-deoxy-D-xylulose-5-phosphate (DXP) and 3-amino-2-oxopropyl phosphate (1-amino-acetone-3-phosphate or AAP) to form pyridoxine 5'-phosphate (PNP) and inorganic phosphate. The sequence is that of Pyridoxine 5'-phosphate synthase from Bradyrhizobium sp. (strain ORS 278).